The sequence spans 145 residues: Protein BUD31 homolog 2 (145 aa).

The protein belongs to the BUD31 (G10) family.

It is found in the nucleus. This Oryza sativa subsp. japonica (Rice) protein is Protein BUD31 homolog 2.